Here is a 299-residue protein sequence, read N- to C-terminus: 4-diphosphocytidyl-2-C-methyl-D-erythritol kinase (299 aa).

Residue Lys22 is part of the active site. An ATP-binding site is contributed by Pro108–Ser118. Asp150 is a catalytic residue.

The protein belongs to the GHMP kinase family. IspE subfamily.

The catalysed reaction is 4-CDP-2-C-methyl-D-erythritol + ATP = 4-CDP-2-C-methyl-D-erythritol 2-phosphate + ADP + H(+). The protein operates within isoprenoid biosynthesis; isopentenyl diphosphate biosynthesis via DXP pathway; isopentenyl diphosphate from 1-deoxy-D-xylulose 5-phosphate: step 3/6. Functionally, catalyzes the phosphorylation of the position 2 hydroxy group of 4-diphosphocytidyl-2C-methyl-D-erythritol. This Desulfotalea psychrophila (strain LSv54 / DSM 12343) protein is 4-diphosphocytidyl-2-C-methyl-D-erythritol kinase.